Reading from the N-terminus, the 457-residue chain is Bifunctional protein GlmU (457 aa).

The segment at M1–R229 is pyrophosphorylase. UDP-N-acetyl-alpha-D-glucosamine contacts are provided by residues L11–G14, K25, Q76, G81–T82, Y103–D105, G140, E154, N169, and N227. A Mg(2+)-binding site is contributed by D105. Mg(2+) is bound at residue N227. The segment at L230–A250 is linker. Residues G251–K457 form an N-acetyltransferase region. Positions 333 and 351 each coordinate UDP-N-acetyl-alpha-D-glucosamine. H363 (proton acceptor) is an active-site residue. UDP-N-acetyl-alpha-D-glucosamine-binding residues include Y366 and N377. Acetyl-CoA is bound by residues A380, N386–Y387, S405, A423, and R440.

In the N-terminal section; belongs to the N-acetylglucosamine-1-phosphate uridyltransferase family. It in the C-terminal section; belongs to the transferase hexapeptide repeat family. In terms of assembly, homotrimer. The cofactor is Mg(2+).

The protein resides in the cytoplasm. The catalysed reaction is alpha-D-glucosamine 1-phosphate + acetyl-CoA = N-acetyl-alpha-D-glucosamine 1-phosphate + CoA + H(+). It carries out the reaction N-acetyl-alpha-D-glucosamine 1-phosphate + UTP + H(+) = UDP-N-acetyl-alpha-D-glucosamine + diphosphate. It functions in the pathway nucleotide-sugar biosynthesis; UDP-N-acetyl-alpha-D-glucosamine biosynthesis; N-acetyl-alpha-D-glucosamine 1-phosphate from alpha-D-glucosamine 6-phosphate (route II): step 2/2. Its pathway is nucleotide-sugar biosynthesis; UDP-N-acetyl-alpha-D-glucosamine biosynthesis; UDP-N-acetyl-alpha-D-glucosamine from N-acetyl-alpha-D-glucosamine 1-phosphate: step 1/1. It participates in bacterial outer membrane biogenesis; LPS lipid A biosynthesis. In terms of biological role, catalyzes the last two sequential reactions in the de novo biosynthetic pathway for UDP-N-acetylglucosamine (UDP-GlcNAc). The C-terminal domain catalyzes the transfer of acetyl group from acetyl coenzyme A to glucosamine-1-phosphate (GlcN-1-P) to produce N-acetylglucosamine-1-phosphate (GlcNAc-1-P), which is converted into UDP-GlcNAc by the transfer of uridine 5-monophosphate (from uridine 5-triphosphate), a reaction catalyzed by the N-terminal domain. The chain is Bifunctional protein GlmU from Photorhabdus laumondii subsp. laumondii (strain DSM 15139 / CIP 105565 / TT01) (Photorhabdus luminescens subsp. laumondii).